Consider the following 296-residue polypeptide: Sulfotransferase 1E1 (296 aa).

49-54 contributes to the 3'-phosphoadenylyl sulfate binding site; sequence KSGTTW. Substrate is bound at residue 107–109; that stretch reads KTH. H109 serves as the catalytic Proton acceptor. 3'-phosphoadenylyl sulfate-binding positions include R131, S139, Y194, 228–233, and 258–260; these read TSFQEM and RKG.

It belongs to the sulfotransferase 1 family. As to quaternary structure, homodimer. Post-translationally, the N-terminus is blocked. As to expression, adrenal gland and much less in liver. Detectable only during pregnancy in uterine.

The protein localises to the cytoplasm. It localises to the cytosol. It catalyses the reaction estrone + 3'-phosphoadenylyl sulfate = estrone 3-sulfate + adenosine 3',5'-bisphosphate + H(+). The enzyme catalyses (24S)-hydroxycholesterol + 3'-phosphoadenylyl sulfate = (24S)-hydroxycholesterol 3-sulfate + adenosine 3',5'-bisphosphate + H(+). It carries out the reaction 17beta-estradiol + 3'-phosphoadenylyl sulfate = 17beta-estradiol 3-sulfate + adenosine 3',5'-bisphosphate + H(+). The catalysed reaction is 3beta-hydroxyandrost-5-en-17-one + 3'-phosphoadenylyl sulfate = dehydroepiandrosterone 3-sulfate + adenosine 3',5'-bisphosphate + H(+). It catalyses the reaction 4-ethylphenol + 3'-phosphoadenylyl sulfate = 4-ethylphenyl sulfate + adenosine 3',5'-bisphosphate + H(+). With respect to regulation, inhibited by estradiol. Its function is as follows. Sulfotransferase that utilizes 3'-phospho-5'-adenylyl sulfate (PAPS) as sulfonate donor to catalyze the sulfate conjugation of estradiol and estrone. Is a key enzyme in estrogen homeostasis, the sulfation of estrogens leads to their inactivation. Also sulfates dehydroepiandrosterone (DHEA), pregnenolone, (24S)-hydroxycholesteroland xenobiotic compounds like ethinylestradiol, equalenin, diethyl stilbesterol and 1-naphthol at significantly lower efficiency. Does not sulfonate cortisol, testosterone and dopamine. May play a role in gut microbiota-host metabolic interaction. O-sulfonates 4-ethylphenol (4-EP), a dietary tyrosine-derived metabolite produced by gut bacteria. The product 4-EPS crosses the blood-brain barrier and may negatively regulate oligodendrocyte maturation and myelination, affecting the functional connectivity of different brain regions associated with the limbic system. This is Sulfotransferase 1E1 (SULT1E1) from Cavia porcellus (Guinea pig).